Consider the following 310-residue polypeptide: Tagatose-6-phosphate kinase (310 aa).

Belongs to the carbohydrate kinase PfkB family. LacC subfamily.

The catalysed reaction is D-tagatofuranose 6-phosphate + ATP = D-tagatofuranose 1,6-bisphosphate + ADP + H(+). It functions in the pathway carbohydrate metabolism; D-tagatose 6-phosphate degradation; D-glyceraldehyde 3-phosphate and glycerone phosphate from D-tagatose 6-phosphate: step 1/2. In Staphylococcus aureus (strain Mu3 / ATCC 700698), this protein is Tagatose-6-phosphate kinase.